A 513-amino-acid polypeptide reads, in one-letter code: MEMAKEQELILVLDFGSQYNQLITRRIREMGVYSELHDHEISIEEIKKMNPKGIILSGGPNSVYEEGSFTIDPEIYNLGIPVLGICYGMQLTTKLLGGKVERANEREYGKAIINAKSDELFAGLPAEQTVWMSHSDKVIEIPEGFEVIADSPSTDYAAIEDKKRRIYGVQFHPEVRHTEYGNDLLNNFVRRVCDCRGQWTMENFIEIEIEKIRQRVGDRRVLCAMSGGVDSSVVAVLLHKAIGDQLTCIFVDHGLLRKGEGDMVMEQFGEGFNMNIIRVNAKDRFMNKLKGVSDPEQKRKIIGNEFVYVFDDEASKLKGVDFLAQGTLYTDVIESGTKTAQTIKSHHNVGGLPEDMEFELIEPINTLFKDEVRKLGIELGIPEHLVWRQPFPGPGLGIRVLGEITEDKLEIVRESDAILRQVIREEGLEREIWQYFTVLPNIQSVGVMGDYRTYDHTVGIRAVTSIDGMTSDFARIDWEVLQKISSRIVNEVDHVNRVVYDITSKPPSTIEWE.

Residues leucine 9 to glutamine 198 enclose the Glutamine amidotransferase type-1 domain. The active-site Nucleophile is the cysteine 86. Catalysis depends on residues histidine 172 and glutamate 174. The 190-residue stretch at tryptophan 199 to arginine 388 folds into the GMPS ATP-PPase domain. ATP is bound at residue serine 226 to serine 232.

In terms of assembly, homodimer.

It catalyses the reaction XMP + L-glutamine + ATP + H2O = GMP + L-glutamate + AMP + diphosphate + 2 H(+). It participates in purine metabolism; GMP biosynthesis; GMP from XMP (L-Gln route): step 1/1. Its function is as follows. Catalyzes the synthesis of GMP from XMP. The sequence is that of GMP synthase [glutamine-hydrolyzing] from Staphylococcus aureus (strain USA300).